Reading from the N-terminus, the 335-residue chain is Glycerol-3-phosphate dehydrogenase [NAD(P)+] (335 aa).

NADPH is bound at residue lysine 109. Positions 109, 141, and 143 each coordinate sn-glycerol 3-phosphate. NADPH is bound at residue alanine 145. Sn-glycerol 3-phosphate contacts are provided by lysine 196, aspartate 249, serine 259, arginine 260, and asparagine 261. The active-site Proton acceptor is the lysine 196. Arginine 260 provides a ligand contact to NADPH. Glutamate 283 is an NADPH binding site.

The protein belongs to the NAD-dependent glycerol-3-phosphate dehydrogenase family.

The protein resides in the cytoplasm. The catalysed reaction is sn-glycerol 3-phosphate + NAD(+) = dihydroxyacetone phosphate + NADH + H(+). The enzyme catalyses sn-glycerol 3-phosphate + NADP(+) = dihydroxyacetone phosphate + NADPH + H(+). It functions in the pathway membrane lipid metabolism; glycerophospholipid metabolism. Catalyzes the reduction of the glycolytic intermediate dihydroxyacetone phosphate (DHAP) to sn-glycerol 3-phosphate (G3P), the key precursor for phospholipid synthesis. The protein is Glycerol-3-phosphate dehydrogenase [NAD(P)+] of Mycoplasma mobile (strain ATCC 43663 / 163K / NCTC 11711) (Mesomycoplasma mobile).